Consider the following 216-residue polypeptide: Sugar transporter SWEET1 (216 aa).

The next 7 helical transmembrane spans lie at 3-23 (WMWL…SSGL), 36-56 (ENIQ…WFYY), 65-85 (LMIV…AYLL), 96-116 (QVLV…LWIL), 125-145 (LGLF…ADLA), 157-177 (SFPL…YGLV), and 181-201 (LYIT…FWLF). A MtN3/slv 1 domain is found at 6 to 90 (LLSGACIVFT…GAYLLYSPER (85 aa)). The region spanning 124 to 206 (QLGLFCSVFT…RFWLFSQFPP (83 aa)) is the MtN3/slv 2 domain.

Belongs to the SWEET sugar transporter family.

The protein localises to the golgi apparatus membrane. Its subcellular location is the cell membrane. Functionally, mediates sugar transport across membranes. The polypeptide is Sugar transporter SWEET1 (slc50a1) (Xenopus laevis (African clawed frog)).